Here is a 232-residue protein sequence, read N- to C-terminus: Phosphatidylserine decarboxylase proenzyme (232 aa).

Ser-190 serves as the catalytic Schiff-base intermediate with substrate; via pyruvic acid. Ser-190 is modified (pyruvic acid (Ser); by autocatalysis).

This sequence belongs to the phosphatidylserine decarboxylase family. PSD-A subfamily. In terms of assembly, heterodimer of a large membrane-associated beta subunit and a small pyruvoyl-containing alpha subunit. Requires pyruvate as cofactor. In terms of processing, is synthesized initially as an inactive proenzyme. Formation of the active enzyme involves a self-maturation process in which the active site pyruvoyl group is generated from an internal serine residue via an autocatalytic post-translational modification. Two non-identical subunits are generated from the proenzyme in this reaction, and the pyruvate is formed at the N-terminus of the alpha chain, which is derived from the carboxyl end of the proenzyme. The post-translation cleavage follows an unusual pathway, termed non-hydrolytic serinolysis, in which the side chain hydroxyl group of the serine supplies its oxygen atom to form the C-terminus of the beta chain, while the remainder of the serine residue undergoes an oxidative deamination to produce ammonia and the pyruvoyl prosthetic group on the alpha chain.

It localises to the cell membrane. The enzyme catalyses a 1,2-diacyl-sn-glycero-3-phospho-L-serine + H(+) = a 1,2-diacyl-sn-glycero-3-phosphoethanolamine + CO2. Its pathway is phospholipid metabolism; phosphatidylethanolamine biosynthesis; phosphatidylethanolamine from CDP-diacylglycerol: step 2/2. In terms of biological role, catalyzes the formation of phosphatidylethanolamine (PtdEtn) from phosphatidylserine (PtdSer). In Bradyrhizobium diazoefficiens (strain JCM 10833 / BCRC 13528 / IAM 13628 / NBRC 14792 / USDA 110), this protein is Phosphatidylserine decarboxylase proenzyme.